We begin with the raw amino-acid sequence, 174 residues long: Ribosome maturation factor RimP (174 aa).

It belongs to the RimP family.

Its subcellular location is the cytoplasm. Required for maturation of 30S ribosomal subunits. The chain is Ribosome maturation factor RimP from Acinetobacter baylyi (strain ATCC 33305 / BD413 / ADP1).